A 492-amino-acid chain; its full sequence is Prenylcysteine oxidase 1-like (492 aa).

Residues 1-21 (MAHAARLLAALAALLAAAATG) form the signal peptide. N-linked (GlcNAc...) asparagine glycosylation is present at asparagine 340.

Belongs to the prenylcysteine oxidase family. The cofactor is FAD.

The protein resides in the secreted. Functionally, likely to have oxidoreductase activity. Required in the mevalonate pathway to regulate prenylation and enhances the bactericidal activity of neutrophils. The chain is Prenylcysteine oxidase 1-like (PCYOX1L) from Bos taurus (Bovine).